We begin with the raw amino-acid sequence, 312 residues long: Olfactory receptor 867 (312 aa).

Topologically, residues 1–6 (MILNCN) are extracellular. The chain crosses the membrane as a helical span at residues 7 to 30 (PFSGLFLSMYLVTVLGNLLIILAV). Topologically, residues 31 to 38 (SSNSHLHN) are cytoplasmic. The helical transmembrane segment at 39–60 (LMYFFLSNLSFVDICFISTTIP) threads the bilayer. Residues 61 to 81 (KMLVNIHSQTKDISYIECLSQ) lie on the Extracellular side of the membrane. Cys-78 and Cys-160 are joined by a disulfide. Residues 82 to 101 (VYFLTTFGGMDNFLLTLMAC) form a helical membrane-spanning segment. The Cytoplasmic portion of the chain corresponds to 102 to 120 (DRYVAICHPLNYTVIMNLQ). A helical membrane pass occupies residues 121–139 (LCALLILMFWLIMFCVSLI). Over 140–177 (HVLLMNELNFSRGTEIPHFFCELAQVLKVANSDTHINN) the chain is Extracellular. The N-linked (GlcNAc...) asparagine glycan is linked to Asn-148. Residues 178 to 200 (VFMYVVTSLLGLIPMTGILMSYS) form a helical membrane-spanning segment. The Cytoplasmic segment spans residues 201–217 (QIASSLLKMSSSVSKYK). A helical membrane pass occupies residues 218–241 (AFSTCGSHLCVVSLFYGSATIVYF). Residues 242-253 (CSSVLHSTHKKM) lie on the Extracellular side of the membrane. The chain crosses the membrane as a helical span at residues 254–273 (IASLMYTVISPMLNPFIYSL). Residues 274 to 312 (RNKDVKGALGKLFIRVASCPLWSKDFRPKFILKPERQSL) lie on the Cytoplasmic side of the membrane.

This sequence belongs to the G-protein coupled receptor 1 family. Epithelium of the tongue; including the taste buds.

Its subcellular location is the cell membrane. Possible olfactory or taste receptor. This Rattus norvegicus (Rat) protein is Olfactory receptor 867 (Olr867).